A 122-amino-acid polypeptide reads, in one-letter code: High-potential iron-sulfur protein (122 aa).

The N-terminal stretch at 1-37 (MSDKPISKSRRDAVKVMLGTAAAIPMINLVGFGTARA) is a signal peptide. Residues Cys-80, Cys-83, Cys-100, and Cys-114 each contribute to the [4Fe-4S] cluster site.

This sequence belongs to the high-potential iron-sulfur protein (HiPIP) family. In terms of assembly, homodimer.

The protein localises to the periplasm. Specific class of high-redox-potential 4Fe-4S ferredoxins. Functions in anaerobic electron transport in most purple and in some other photosynthetic bacteria and in at least one genus (Paracoccus) of halophilic, denitrifying bacteria. This is High-potential iron-sulfur protein (hip) from Allochromatium vinosum (strain ATCC 17899 / DSM 180 / NBRC 103801 / NCIMB 10441 / D) (Chromatium vinosum).